A 525-amino-acid polypeptide reads, in one-letter code: Alpha-ketoglutaric semialdehyde dehydrogenase 2 (525 aa).

Residues Lys-185, Glu-188, and Gly-242–Gly-247 contribute to the NAD(+) site. Glu-266 serves as the catalytic Proton acceptor. Residue Cys-303 is the Nucleophile of the active site. Position 394 (Glu-394) interacts with NAD(+).

This sequence belongs to the aldehyde dehydrogenase family. As to quaternary structure, homodimer.

It catalyses the reaction 2,5-dioxopentanoate + NADP(+) + H2O = 2-oxoglutarate + NADPH + 2 H(+). It carries out the reaction 2,5-dioxopentanoate + NAD(+) + H2O = 2-oxoglutarate + NADH + 2 H(+). It participates in carbohydrate acid metabolism; D-glucarate degradation. Its pathway is carbohydrate acid metabolism; galactarate degradation. Functionally, catalyzes the NAD(P)(+)-dependent oxidation of alpha-ketoglutaric semialdehyde (alphaKGSA) to alpha-ketoglutarate. Involved in D-glucarate/D-galactarate metabolism. Prefers NAD(+) to NADP(+) as a cosubstrate. This Azospirillum brasilense protein is Alpha-ketoglutaric semialdehyde dehydrogenase 2.